Reading from the N-terminus, the 137-residue chain is Universal stress protein in QAH/OAS sulfhydrylase 3'region (137 aa).

It belongs to the universal stress protein A family.

The polypeptide is Universal stress protein in QAH/OAS sulfhydrylase 3'region (Thermus aquaticus).